Here is a 238-residue protein sequence, read N- to C-terminus: D-aminoacyl-tRNA deacylase (238 aa).

The protein belongs to the DtdA deacylase family. As to quaternary structure, monomer. The cofactor is Zn(2+).

The enzyme catalyses a D-aminoacyl-tRNA + H2O = a tRNA + a D-alpha-amino acid + H(+). The catalysed reaction is glycyl-tRNA(Ala) + H2O = tRNA(Ala) + glycine + H(+). It carries out the reaction D-tyrosyl-tRNA(Tyr) + H2O = D-tyrosine + tRNA(Tyr). In terms of biological role, D-aminoacyl-tRNA deacylase with broad substrate specificity. By recycling D-aminoacyl-tRNA to D-amino acids and free tRNA molecules, this enzyme counteracts the toxicity associated with the formation of D-aminoacyl-tRNA entities in vivo. Catalyzes the hydrolysis of D-tyrosyl-tRNA(Tyr). The protein is D-aminoacyl-tRNA deacylase of Saccharolobus solfataricus (strain ATCC 35092 / DSM 1617 / JCM 11322 / P2) (Sulfolobus solfataricus).